The sequence spans 173 residues: Protein FAM180A (173 aa).

The first 17 residues, 1-17 (MSWKALTILLVFSSTQA), serve as a signal peptide directing secretion.

This sequence belongs to the FAM180 family.

The protein resides in the secreted. This is Protein FAM180A (Fam180a) from Mus musculus (Mouse).